The following is a 143-amino-acid chain: uncharacterized protein (143 aa).

Positions 1–32 are cleaved as a signal peptide; the sequence is MITNLRRRTAMAAAGLGAALGLGILLVPTVDA.

It to M.tuberculosis Rv1269c.

This is an uncharacterized protein from Mycobacterium tuberculosis (strain CDC 1551 / Oshkosh).